Consider the following 224-residue polypeptide: ATP-dependent dethiobiotin synthetase BioD (224 aa).

12 to 17 is an ATP binding site; the sequence is GVGKTF. Threonine 16 is a binding site for Mg(2+). Residue lysine 37 is part of the active site. Threonine 41 contacts substrate. Position 107 (glutamate 107) interacts with Mg(2+). ATP contacts are provided by residues 107-110, 167-168, 197-199, and glutamate 204; these read EGAG, GS, and PEG.

The protein belongs to the dethiobiotin synthetase family. In terms of assembly, homodimer. Mg(2+) serves as cofactor.

The protein localises to the cytoplasm. The enzyme catalyses (7R,8S)-7,8-diammoniononanoate + CO2 + ATP = (4R,5S)-dethiobiotin + ADP + phosphate + 3 H(+). The protein operates within cofactor biosynthesis; biotin biosynthesis; biotin from 7,8-diaminononanoate: step 1/2. Catalyzes a mechanistically unusual reaction, the ATP-dependent insertion of CO2 between the N7 and N8 nitrogen atoms of 7,8-diaminopelargonic acid (DAPA, also called 7,8-diammoniononanoate) to form a ureido ring. The polypeptide is ATP-dependent dethiobiotin synthetase BioD (Corynebacterium glutamicum (strain R)).